The chain runs to 264 residues: Probable aquaporin TIP3-1 (264 aa).

2 helical membrane-spanning segments follow: residues 28–48 (AAIS…GSIL) and 62–82 (GLVA…AVAV). Residues 90–92 (NPA) carry the NPA 1 motif. 3 consecutive transmembrane segments (helical) span residues 105–125 (LIRA…ATLL), 149–169 (AVLL…ATVI), and 176–196 (VGTI…LAGG). The NPA 2 signature appears at 204–206 (NPA). The helical transmembrane segment at 224 to 244 (YWLGPFVGAGLAGLLYEYLVI) threads the bilayer.

Belongs to the MIP/aquaporin (TC 1.A.8) family. TIP (TC 1.A.8.10) subfamily. In terms of tissue distribution, expressed in leaves and at lower levels in roots.

Its subcellular location is the vacuole membrane. In terms of biological role, aquaporins facilitate the transport of water and small neutral solutes across cell membranes. May be involved in transport from the vacuolar compartment to the cytoplasm. The protein is Probable aquaporin TIP3-1 (TIP3-1) of Oryza sativa subsp. japonica (Rice).